A 190-amino-acid polypeptide reads, in one-letter code: Putative manganese efflux pump MntP (190 aa).

Transmembrane regions (helical) follow at residues 5 to 25 (ALLALAVALAMDALAVAVATG), 41 to 61 (WHFGLFQAAMPIAGWFMGQGI), 64 to 84 (FVDAWAHWIAFGLLAFIGLKM), 105 to 125 (TSLIMLSVATSIDALAVGVTL), 127 to 147 (MLGLSIWMPAAVIGLVCLGLT), and 169 to 189 (ILGGAVLLGIGFKILHESGVF).

The protein belongs to the MntP (TC 9.B.29) family.

The protein localises to the cell inner membrane. In terms of biological role, probably functions as a manganese efflux pump. This Oleidesulfovibrio alaskensis (strain ATCC BAA-1058 / DSM 17464 / G20) (Desulfovibrio alaskensis) protein is Putative manganese efflux pump MntP.